Consider the following 327-residue polypeptide: Methionyl-tRNA formyltransferase (327 aa).

Residue 121–124 participates in (6S)-5,6,7,8-tetrahydrofolate binding; the sequence is SLLP.

Belongs to the Fmt family.

The catalysed reaction is L-methionyl-tRNA(fMet) + (6R)-10-formyltetrahydrofolate = N-formyl-L-methionyl-tRNA(fMet) + (6S)-5,6,7,8-tetrahydrofolate + H(+). Attaches a formyl group to the free amino group of methionyl-tRNA(fMet). The formyl group appears to play a dual role in the initiator identity of N-formylmethionyl-tRNA by promoting its recognition by IF2 and preventing the misappropriation of this tRNA by the elongation apparatus. This Burkholderia pseudomallei (strain K96243) protein is Methionyl-tRNA formyltransferase.